Reading from the N-terminus, the 196-residue chain is Imidazoleglycerol-phosphate dehydratase (196 aa).

Belongs to the imidazoleglycerol-phosphate dehydratase family.

The protein resides in the cytoplasm. The enzyme catalyses D-erythro-1-(imidazol-4-yl)glycerol 3-phosphate = 3-(imidazol-4-yl)-2-oxopropyl phosphate + H2O. Its pathway is amino-acid biosynthesis; L-histidine biosynthesis; L-histidine from 5-phospho-alpha-D-ribose 1-diphosphate: step 6/9. This is Imidazoleglycerol-phosphate dehydratase from Clostridium novyi (strain NT).